The chain runs to 179 residues: uncharacterized protein (179 aa).

Residues 1 to 26 form the signal peptide; sequence MKKNMILFFGILKKLLICILKMEIKC.

This is an uncharacterized protein from Acheta domesticus (House cricket).